A 341-amino-acid chain; its full sequence is L-threonine 3-dehydrogenase (341 aa).

Residue cysteine 38 coordinates Zn(2+). Catalysis depends on charge relay system residues threonine 40 and histidine 43. Histidine 63, glutamate 64, cysteine 93, cysteine 96, cysteine 99, and cysteine 107 together coordinate Zn(2+). NAD(+) is bound by residues isoleucine 175, aspartate 195, arginine 200, 262 to 264 (LGI), and 286 to 287 (IY).

It belongs to the zinc-containing alcohol dehydrogenase family. Homotetramer. The cofactor is Zn(2+).

Its subcellular location is the cytoplasm. It catalyses the reaction L-threonine + NAD(+) = (2S)-2-amino-3-oxobutanoate + NADH + H(+). The protein operates within amino-acid degradation; L-threonine degradation via oxydo-reductase pathway; glycine from L-threonine: step 1/2. Functionally, catalyzes the NAD(+)-dependent oxidation of L-threonine to 2-amino-3-ketobutyrate. The sequence is that of L-threonine 3-dehydrogenase from Proteus mirabilis (strain HI4320).